The sequence spans 257 residues: uncharacterized protein (257 aa).

Active-site charge relay system residues include Ser122 and His236.

Belongs to the peptidase S9B family.

This is an uncharacterized protein from Bacillus subtilis (strain 168).